Consider the following 170-residue polypeptide: Ribosome maturation factor RimP (170 aa).

The protein belongs to the RimP family.

The protein localises to the cytoplasm. In terms of biological role, required for maturation of 30S ribosomal subunits. This chain is Ribosome maturation factor RimP, found in Acidothermus cellulolyticus (strain ATCC 43068 / DSM 8971 / 11B).